The primary structure comprises 203 residues: Dual-action ribosomal maturation protein DarP (203 aa).

2 disordered regions span residues 1 to 31 (MTRKTRIQTIESAEPEVDENGYDRPSKSQLK) and 178 to 203 (NADGPPAQTDSEADDAQDDEDDDRDA). Basic and acidic residues predominate over residues 21-31 (GYDRPSKSQLK). Residues 188 to 203 (SEADDAQDDEDDDRDA) show a composition bias toward acidic residues.

The protein belongs to the DarP family.

The protein resides in the cytoplasm. In terms of biological role, member of a network of 50S ribosomal subunit biogenesis factors which assembles along the 30S-50S interface, preventing incorrect 23S rRNA structures from forming. Promotes peptidyl transferase center (PTC) maturation. The sequence is that of Dual-action ribosomal maturation protein DarP from Paraburkholderia xenovorans (strain LB400).